Reading from the N-terminus, the 413-residue chain is Cell division protein FtsZ 2 (413 aa).

Residues 132–134, E171, R175, and D218 each bind GTP; that span reads GTG.

The protein belongs to the FtsZ family. As to quaternary structure, homodimer. Polymerizes to form a dynamic ring structure in a strictly GTP-dependent manner. Interacts directly with several other division proteins.

It is found in the cytoplasm. Essential cell division protein that forms a contractile ring structure (Z ring) at the future cell division site. The regulation of the ring assembly controls the timing and the location of cell division. One of the functions of the FtsZ ring is to recruit other cell division proteins to the septum to produce a new cell wall between the dividing cells. Binds GTP and shows GTPase activity. This is Cell division protein FtsZ 2 from Thermococcus kodakarensis (strain ATCC BAA-918 / JCM 12380 / KOD1) (Pyrococcus kodakaraensis (strain KOD1)).